Here is a 309-residue protein sequence, read N- to C-terminus: Small ribosomal subunit biogenesis GTPase RsgA (309 aa).

The region spanning 64-225 (ENELVRPPLA…VADTPGFSTY (162 aa)) is the CP-type G domain. GTP is bound by residues 113 to 116 (SKTD) and 168 to 176 (GQTGAGKST). Zn(2+) contacts are provided by Cys-249, Cys-254, His-256, and Cys-262.

The protein belongs to the TRAFAC class YlqF/YawG GTPase family. RsgA subfamily. Monomer. Associates with 30S ribosomal subunit, binds 16S rRNA. Requires Zn(2+) as cofactor.

It localises to the cytoplasm. One of several proteins that assist in the late maturation steps of the functional core of the 30S ribosomal subunit. Helps release RbfA from mature subunits. May play a role in the assembly of ribosomal proteins into the subunit. Circularly permuted GTPase that catalyzes slow GTP hydrolysis, GTPase activity is stimulated by the 30S ribosomal subunit. This chain is Small ribosomal subunit biogenesis GTPase RsgA, found in Pediococcus pentosaceus (strain ATCC 25745 / CCUG 21536 / LMG 10740 / 183-1w).